The primary structure comprises 440 residues: Tyrosine--tRNA ligase (440 aa).

Tyr-46 is a binding site for L-tyrosine. The 'HIGH' region signature appears at 51-60 (PTAASLHIGN). Residues Tyr-181 and Gln-185 each contribute to the L-tyrosine site. Positions 241-245 (KFGKS) match the 'KMSKS' region motif. Lys-244 is a binding site for ATP. The 67-residue stretch at 373-439 (DRVIDAAQAA…GKKALGAVEN (67 aa)) folds into the S4 RNA-binding domain.

The protein belongs to the class-I aminoacyl-tRNA synthetase family. TyrS type 1 subfamily. In terms of assembly, homodimer.

It is found in the cytoplasm. It catalyses the reaction tRNA(Tyr) + L-tyrosine + ATP = L-tyrosyl-tRNA(Tyr) + AMP + diphosphate + H(+). Catalyzes the attachment of tyrosine to tRNA(Tyr) in a two-step reaction: tyrosine is first activated by ATP to form Tyr-AMP and then transferred to the acceptor end of tRNA(Tyr). In Bifidobacterium longum (strain NCC 2705), this protein is Tyrosine--tRNA ligase.